A 191-amino-acid chain; its full sequence is Probable protein-S-isoprenylcysteine O-methyltransferase (191 aa).

Helical transmembrane passes span 8–28 (WLFA…AAAF), 45–65 (YVLA…LFPE), and 66–86 (LKEY…GEVI). Residues 110-113 (HKLI), Tyr-118, and 123-126 (HPGY) each bind S-adenosyl-L-methionine. A helical transmembrane segment spans residues 129–149 (FLIWAVGTQVMLCNPLSTVAF). Arg-160 is a binding site for substrate. Glu-164 serves as a coordination point for S-adenosyl-L-methionine.

Belongs to the class VI-like SAM-binding methyltransferase superfamily. Isoprenylcysteine carboxyl methyltransferase family. It depends on Zn(2+) as a cofactor.

The protein resides in the endoplasmic reticulum membrane. It catalyses the reaction [protein]-C-terminal S-[(2E,6E)-farnesyl]-L-cysteine + S-adenosyl-L-methionine = [protein]-C-terminal S-[(2E,6E)-farnesyl]-L-cysteine methyl ester + S-adenosyl-L-homocysteine. Catalyzes the post-translational methylation of isoprenylated C-terminal cysteine residues. Carboxyl methylation is a reversible and potentially regulated step in the post-translational modification of prenylated proteins. The sequence is that of Probable protein-S-isoprenylcysteine O-methyltransferase (ICMT) from Oryza sativa subsp. indica (Rice).